The sequence spans 141 residues: MAAKKVVKQIKLQVEAGKANPAPPVGPALGQAGLNIMEFCKQFNERSKNQMGLKLPVVITVYSDRSFTFVTKSPPAALLVMKALGLQGGSATPHTVKVGTIKRAQLEEIAKTKMEDLNANDMDAAVKIIAGTCRSMGVNVE.

This sequence belongs to the universal ribosomal protein uL11 family. In terms of assembly, part of the ribosomal stalk of the 50S ribosomal subunit. Interacts with L10 and the large rRNA to form the base of the stalk. L10 forms an elongated spine to which L12 dimers bind in a sequential fashion forming a multimeric L10(L12)X complex. Post-translationally, one or more lysine residues are methylated.

Forms part of the ribosomal stalk which helps the ribosome interact with GTP-bound translation factors. This Leptospira biflexa serovar Patoc (strain Patoc 1 / Ames) protein is Large ribosomal subunit protein uL11.